The following is a 269-amino-acid chain: 4-hydroxy-tetrahydrodipicolinate reductase (269 aa).

Residues 12 to 17 (GGSGRM), 102 to 104 (GTT), and 126 to 129 (SPNM) contribute to the NAD(+) site. H159 (proton donor/acceptor) is an active-site residue. (S)-2,3,4,5-tetrahydrodipicolinate is bound at residue H160. Catalysis depends on K163, which acts as the Proton donor. 169–170 (GT) provides a ligand contact to (S)-2,3,4,5-tetrahydrodipicolinate.

It belongs to the DapB family.

The protein localises to the cytoplasm. The catalysed reaction is (S)-2,3,4,5-tetrahydrodipicolinate + NAD(+) + H2O = (2S,4S)-4-hydroxy-2,3,4,5-tetrahydrodipicolinate + NADH + H(+). The enzyme catalyses (S)-2,3,4,5-tetrahydrodipicolinate + NADP(+) + H2O = (2S,4S)-4-hydroxy-2,3,4,5-tetrahydrodipicolinate + NADPH + H(+). The protein operates within amino-acid biosynthesis; L-lysine biosynthesis via DAP pathway; (S)-tetrahydrodipicolinate from L-aspartate: step 4/4. Functionally, catalyzes the conversion of 4-hydroxy-tetrahydrodipicolinate (HTPA) to tetrahydrodipicolinate. The protein is 4-hydroxy-tetrahydrodipicolinate reductase of Leptospira borgpetersenii serovar Hardjo-bovis (strain JB197).